A 381-amino-acid chain; its full sequence is tRNA-specific 2-thiouridylase MnmA (381 aa).

Residues 9–16 (GMSGGVDS) and methionine 35 each bind ATP. An interaction with target base in tRNA region spans residues 95–97 (NPD). The active-site Nucleophile is the cysteine 100. Cysteine 100 and cysteine 196 are disulfide-bonded. Glycine 124 contacts ATP. An interaction with tRNA region spans residues 146 to 148 (KDQ). The Cysteine persulfide intermediate role is filled by cysteine 196. An interaction with tRNA region spans residues 308-309 (RY).

It belongs to the MnmA/TRMU family.

It localises to the cytoplasm. It carries out the reaction S-sulfanyl-L-cysteinyl-[protein] + uridine(34) in tRNA + AH2 + ATP = 2-thiouridine(34) in tRNA + L-cysteinyl-[protein] + A + AMP + diphosphate + H(+). Its function is as follows. Catalyzes the 2-thiolation of uridine at the wobble position (U34) of tRNA, leading to the formation of s(2)U34. This chain is tRNA-specific 2-thiouridylase MnmA, found in Burkholderia multivorans (strain ATCC 17616 / 249).